Consider the following 103-residue polypeptide: Small ribosomal subunit protein uS10 (103 aa).

It belongs to the universal ribosomal protein uS10 family. In terms of assembly, part of the 30S ribosomal subunit.

Involved in the binding of tRNA to the ribosomes. This chain is Small ribosomal subunit protein uS10, found in Neisseria gonorrhoeae.